A 373-amino-acid polypeptide reads, in one-letter code: Mitochondrial fission regulator 2 (373 aa).

S136 is subject to Phosphoserine. Residues 151-179 (VSEAAIKKIAALEDELTSLRAQIAAIVAM) adopt a coiled-coil conformation. Disordered stretches follow at residues 189–331 (GFIS…WDPV) and 346–373 (DDSFDSENRSWQGSPFSSPETSRNGSRF). Residues 224-239 (SPPPLPPPPPPLPPPQ) are compositionally biased toward pro residues. Composition is skewed to basic and acidic residues over residues 275 to 287 (KKTDGSHHSESQR) and 297 to 310 (VLKDMNKVKLRPVE). Residues S312 and S348 each carry the phosphoserine modification. The segment covering 354-373 (RSWQGSPFSSPETSRNGSRF) has biased composition (polar residues).

The protein belongs to the MTFR1 family.

The protein resides in the mitochondrion. Its function is as follows. May play a role in mitochondrial aerobic respiration essentially in the testis. Can also promote mitochondrial fission. In Rattus norvegicus (Rat), this protein is Mitochondrial fission regulator 2 (Mtfr2).